Here is a 1062-residue protein sequence, read N- to C-terminus: Carbamoyl phosphate synthase large chain (1062 aa).

The carboxyphosphate synthetic domain stretch occupies residues 1 to 401 (MPKRTDIHKI…AMQKAVQSLE (401 aa)). Residues arginine 129, arginine 169, glycine 175, glycine 176, lysine 208, isoleucine 210, glutamate 215, glycine 241, isoleucine 242, histidine 243, glutamine 284, and glutamate 298 each contribute to the ATP site. An ATP-grasp 1 domain is found at 133-327 (KELCQKLGEP…IAKMAAKIAI (195 aa)). 3 residues coordinate Mg(2+): glutamine 284, glutamate 298, and asparagine 300. Mn(2+) contacts are provided by glutamine 284, glutamate 298, and asparagine 300. An oligomerization domain region spans residues 402 to 546 (IDEKDLYSAK…YSTYDGENES (145 aa)). Positions 547-929 (RKSGKKSVIV…ALYKAFAGAK (383 aa)) are carbamoyl phosphate synthetic domain. In terms of domain architecture, ATP-grasp 2 spans 671-861 (DQIIKSLHLH…MAQVATRVIM (191 aa)). ATP contacts are provided by arginine 707, aspartate 746, leucine 748, glutamate 752, glycine 777, valine 778, histidine 779, serine 780, glutamine 820, and glutamate 832. Residues glutamine 820, glutamate 832, and asparagine 834 each coordinate Mg(2+). Residues glutamine 820, glutamate 832, and asparagine 834 each contribute to the Mn(2+) site. An MGS-like domain is found at 930–1062 (MQLPENGNVL…NRSFATDALK (133 aa)). An allosteric domain region spans residues 930–1062 (MQLPENGNVL…NRSFATDALK (133 aa)).

The protein belongs to the CarB family. In terms of assembly, composed of two chains; the small (or glutamine) chain promotes the hydrolysis of glutamine to ammonia, which is used by the large (or ammonia) chain to synthesize carbamoyl phosphate. Tetramer of heterodimers (alpha,beta)4. Mg(2+) is required as a cofactor. Mn(2+) serves as cofactor.

It carries out the reaction hydrogencarbonate + L-glutamine + 2 ATP + H2O = carbamoyl phosphate + L-glutamate + 2 ADP + phosphate + 2 H(+). It catalyses the reaction hydrogencarbonate + NH4(+) + 2 ATP = carbamoyl phosphate + 2 ADP + phosphate + 2 H(+). It functions in the pathway amino-acid biosynthesis; L-arginine biosynthesis; carbamoyl phosphate from bicarbonate: step 1/1. Its pathway is pyrimidine metabolism; UMP biosynthesis via de novo pathway; (S)-dihydroorotate from bicarbonate: step 1/3. Functionally, large subunit of the glutamine-dependent carbamoyl phosphate synthetase (CPSase). CPSase catalyzes the formation of carbamoyl phosphate from the ammonia moiety of glutamine, carbonate, and phosphate donated by ATP, constituting the first step of 2 biosynthetic pathways, one leading to arginine and/or urea and the other to pyrimidine nucleotides. The large subunit (synthetase) binds the substrates ammonia (free or transferred from glutamine from the small subunit), hydrogencarbonate and ATP and carries out an ATP-coupled ligase reaction, activating hydrogencarbonate by forming carboxy phosphate which reacts with ammonia to form carbamoyl phosphate. The chain is Carbamoyl phosphate synthase large chain from Lactobacillus delbrueckii subsp. bulgaricus (strain ATCC BAA-365 / Lb-18).